Reading from the N-terminus, the 142-residue chain is Hemoglobin subunit alpha-A (142 aa).

Residues 2-142 (VLSAADKTNV…VGAVLTAKYR (141 aa)) enclose the Globin domain. O2 is bound at residue H59. H88 serves as a coordination point for heme b.

The protein belongs to the globin family. In terms of assembly, heterotetramer of two alpha chains and two beta chains. Red blood cells.

Its function is as follows. Involved in oxygen transport from the lung to the various peripheral tissues. This Cairina moschata (Muscovy duck) protein is Hemoglobin subunit alpha-A (HBAA).